The sequence spans 792 residues: MKEDNCLHAALICLGMLYYSHAITTEKLNHVRPSLHGHHEKGKEGQVLHRSKRGWVWNQFFVIEEYTGPDPVLVGRLHSDIDSGDGNIKYILSGEGAGIIFVIDDKSGNIHATKTLDREERAQYTLTAQAVDRNTNRPLEPPSEFIVKVQDINDNPPEFLHENYHANVPERSNVGTSVIQVTASDADDPTYGNSAKLVYSILEGQPYFSVEAQTGIIRTALPNMDREAKEEYHVVIQAKDMGGHMGGLSGTTKVTITLTDVNDNPPKFPQSVYQMSVSEAAVPGEEVGRVKAKDPDIGENGLVAYSIIDGDGMDMFEITTDYETQEGVVKLKKVLDFETKKSYSLKVEAANVHIDPKFISNGPFKDTVTVKITVEDADEPPVFLKPSYIFEVQENAASGTVVGKVHAKDPDAANSAIRYSIDRHTDLERYFTINADDGNIKTIKALDREEIAWHNISVFAVEVHKQHQEAKVPVAIKVVDVNDNAPKFAAAYEAFVCENARSNQQFITISADDKDDSANGPRFIFSLPPEIIHNPNFSLRDNRDNTASVLVRREGFSRQKQDLYLLPIVISDGGLPPMSSTNTLTIRVCGCDSNGSLLSCNAEAYILNAGLSTGALIAILACIVILLVIVVLFVTLKRQKKEPLIVFEEEDVRENIITYDDEGGGEEDTEAFDIATLQNPDGINGFIPRKDIKPEYQYMPRPGLRPAPNSVDVDDFINTRIQEADNDPTAPPYDSIQIYGYEGRGSVAGSLSSLESATTDSDLDYDYLQNWGPRFKKLADLYGSKDTFDDDS.

The first 22 residues, 1 to 22 (MKEDNCLHAALICLGMLYYSHA), serve as a signal peptide directing secretion. The propeptide occupies 23-53 (ITTEKLNHVRPSLHGHHEKGKEGQVLHRSKR). Cadherin domains follow at residues 54 to 159 (GWVW…PPEF), 160 to 268 (LHEN…PPKF), 269 to 383 (PQSV…PPVF), 384 to 486 (LKPS…DNAP), and 487 to 608 (KFAA…YILN). Residues 54-613 (GWVWNQFFVI…AYILNAGLST (560 aa)) lie on the Extracellular side of the membrane. Asn-455, Asn-536, and Asn-594 each carry an N-linked (GlcNAc...) asparagine glycan. A helical transmembrane segment spans residues 614 to 634 (GALIAILACIVILLVIVVLFV). Topologically, residues 635–792 (TLKRQKKEPL…GSKDTFDDDS (158 aa)) are cytoplasmic.

The protein localises to the cell membrane. Its function is as follows. Cadherins are calcium-dependent cell adhesion proteins. They preferentially interact with themselves in a homophilic manner in connecting cells; cadherins may thus contribute to the sorting of heterogeneous cell types. Required for proper focal adhesion assembly. Involved in the regulation of cell migration. This chain is Cadherin-11 (CDH11), found in Gallus gallus (Chicken).